A 273-amino-acid chain; its full sequence is MAKCGVPQRVPGDCFRPVSTRHPRQIPSCFSICFLTHEAQSLRALAHSWWSGALLLLLLFLFLSLEQTSTSYNAKIKQKVGECPRQRLECRNESLSSCKTDFNCKAHFKCCQFACGRKCMDPYEEPCMLPSDKGNCQDILTRWYFDSQKHQCRAFLYSGCRGNANNFLTKTDCRNACMFVEKKGQCPLFPFQMRMECPASCKNDMDCPEKEKCCESRCGFICARVWLVKTGFCPRKPIVCSKIDKPKCLQDIDCPLDEKCCTRCGLKCLKPRH.

Residues 45 to 65 form a helical membrane-spanning segment; it reads LAHSWWSGALLLLLLFLFLSL. In terms of domain architecture, WAP 1 spans 76–123; it reads IKQKVGECPRQRLECRNESLSSCKTDFNCKAHFKCCQFACGRKCMDPY. 15 cysteine pairs are disulfide-bonded: cysteine 83-cysteine 111, cysteine 90-cysteine 115, cysteine 98-cysteine 110, cysteine 104-cysteine 119, cysteine 127-cysteine 177, cysteine 136-cysteine 160, cysteine 152-cysteine 173, cysteine 186-cysteine 214, cysteine 197-cysteine 218, cysteine 201-cysteine 213, cysteine 207-cysteine 222, cysteine 233-cysteine 261, cysteine 240-cysteine 264, cysteine 248-cysteine 260, and cysteine 254-cysteine 268. Residues 127-177 enclose the BPTI/Kunitz inhibitor domain; it reads CMLPSDKGNCQDILTRWYFDSQKHQCRAFLYSGCRGNANNFLTKTDCRNAC. 2 WAP domains span residues 179–226 and 228–272; these read FVEK…ARVW and VKTG…LKPR.

The protein localises to the membrane. In Mus musculus (Mouse), this protein is WAP four-disulfide core domain protein 8 (Wfdc8).